A 195-amino-acid chain; its full sequence is Ribonuclease HII (195 aa).

The 188-residue stretch at 8 to 195 (WGVVGVDEAG…FAPVRRLLGG (188 aa)) folds into the RNase H type-2 domain. The a divalent metal cation site is built by aspartate 14, glutamate 15, and aspartate 106.

This sequence belongs to the RNase HII family. Mn(2+) is required as a cofactor. Requires Mg(2+) as cofactor.

The protein localises to the cytoplasm. The enzyme catalyses Endonucleolytic cleavage to 5'-phosphomonoester.. Its function is as follows. Endonuclease that specifically degrades the RNA of RNA-DNA hybrids. This chain is Ribonuclease HII, found in Halorhodospira halophila (strain DSM 244 / SL1) (Ectothiorhodospira halophila (strain DSM 244 / SL1)).